We begin with the raw amino-acid sequence, 102 residues long: Small ribosomal subunit protein uS10 (102 aa).

It belongs to the universal ribosomal protein uS10 family. In terms of assembly, part of the 30S ribosomal subunit.

Functionally, involved in the binding of tRNA to the ribosomes. The sequence is that of Small ribosomal subunit protein uS10 from Nitrosospira multiformis (strain ATCC 25196 / NCIMB 11849 / C 71).